Here is a 309-residue protein sequence, read N- to C-terminus: Olfactory receptor 10J5 (309 aa).

Residues 1–27 lie on the Extracellular side of the membrane; sequence MQRNNFTEVIEFVFLGFSSFGKHQITL. Residues 28–48 traverse the membrane as a helical segment; the sequence is FVVFLTIYILTLAGNIIIVTI. At 49–57 the chain is on the cytoplasmic side; that stretch reads THIDHHLHT. The chain crosses the membrane as a helical span at residues 58–78; the sequence is PMYFFLSMLASSETVYTLVIV. Residues 79-84 lie on the Extracellular side of the membrane; it reads PRMLSS. Residues 85–105 traverse the membrane as a helical segment; it reads LIFYNLPISLAGCATQMFFFV. The cysteines at positions 97 and 178 are disulfide-linked. Topologically, residues 106 to 131 are cytoplasmic; it reads TLATNNCFLLTAMGYDRYVAICNPLR. Residues 132–152 form a helical membrane-spanning segment; sequence YTIIMSKGMCALLVCGSLGTG. At 153-203 the chain is on the extracellular side; sequence LVMAVLHVPAMFHLPFCGTVVEHFFCDIYPVMKLSCVDTTVNEIINYGVSS. Residues 204–224 traverse the membrane as a helical segment; sequence FVILVPIGLIFISYVLIVSSI. Residues 225–235 are Cytoplasmic-facing; sequence LKIVSTEGQKK. A helical membrane pass occupies residues 236 to 256; it reads AFATCASHLTVVIVHYGCASI. At 257-270 the chain is on the extracellular side; that stretch reads AYLKPKSESSVEKD. A helical membrane pass occupies residues 271–291; that stretch reads LLLSVTYTIITPLLNPVVYSL. At 292-309 the chain is on the cytoplasmic side; the sequence is RNKEVKDALCRAVGRNTS.

This sequence belongs to the G-protein coupled receptor 1 family. In terms of tissue distribution, expressed in the olfactory epithelium as well as in the testis. Expressed in round spermatids during stages VI-VIII of spermatogenesis.

The protein resides in the cell membrane. Functionally, olfactory receptor. Activated by the synthetic floral odorant, lyral, and by alpha-cedrene, a sesquiterpene constituent of cedarwood oil. Its activation increases intracellular Ca(2+). Acts as a key regulator of myogenesis through its actions on cell migration and adhesion by activating the Ca(2+)-dependent AKT signal transduction pathway. Also acts as a regulator of angiogenesis. Moreover, plays a role in the regulation of lipid accumulation in hepatocytes via the cAMP-PKA pathway. Involved in sperm chemotaxis and motility. The sequence is that of Olfactory receptor 10J5 from Mus musculus (Mouse).